Here is a 280-residue protein sequence, read N- to C-terminus: Ribonuclease Z (280 aa).

The Zn(2+) site is built by H61, H63, D65, H66, H153, D176, and H240. The Proton acceptor role is filled by D65.

The protein belongs to the RNase Z family. In terms of assembly, homodimer. It depends on Zn(2+) as a cofactor.

It carries out the reaction Endonucleolytic cleavage of RNA, removing extra 3' nucleotides from tRNA precursor, generating 3' termini of tRNAs. A 3'-hydroxy group is left at the tRNA terminus and a 5'-phosphoryl group is left at the trailer molecule.. Its function is as follows. Zinc phosphodiesterase, which displays some tRNA 3'-processing endonuclease activity. Probably involved in tRNA maturation, by removing a 3'-trailer from precursor tRNA. The polypeptide is Ribonuclease Z (Mycobacterium bovis (strain BCG / Pasteur 1173P2)).